The primary structure comprises 119 residues: Large ribosomal subunit protein bL20 (119 aa).

Belongs to the bacterial ribosomal protein bL20 family.

In terms of biological role, binds directly to 23S ribosomal RNA and is necessary for the in vitro assembly process of the 50S ribosomal subunit. It is not involved in the protein synthesizing functions of that subunit. The protein is Large ribosomal subunit protein bL20 of Clostridium tetani (strain Massachusetts / E88).